A 162-amino-acid polypeptide reads, in one-letter code: Peptidyl-prolyl cis-trans isomerase (162 aa).

One can recognise a PPIase cyclophilin-type domain in the interval 5–161; the sequence is FFDVIANGQP…ARIVIDKCGT (157 aa).

This sequence belongs to the cyclophilin-type PPIase family. PPIase A subfamily.

The protein localises to the cytoplasm. It carries out the reaction [protein]-peptidylproline (omega=180) = [protein]-peptidylproline (omega=0). Binds cyclosporin A (CsA). CsA mediates some of its effects via an inhibitory action on PPIase. Its function is as follows. PPIases accelerate the folding of proteins. It catalyzes the cis-trans isomerization of proline imidic peptide bonds in oligopeptides. The polypeptide is Peptidyl-prolyl cis-trans isomerase (ppi1) (Schizosaccharomyces pombe (strain 972 / ATCC 24843) (Fission yeast)).